We begin with the raw amino-acid sequence, 197 residues long: Histone chaperone asf1b-A (197 aa).

It belongs to the ASF1 family. In terms of assembly, interacts with histone H3 and histone H4.

The protein localises to the nucleus. Functionally, histone chaperone that facilitates histone deposition and histone exchange and removal during nucleosome assembly and disassembly. This chain is Histone chaperone asf1b-A (asf1ba), found in Danio rerio (Zebrafish).